Reading from the N-terminus, the 202-residue chain is Protein GrpE (202 aa).

Residues 21–37 (EELKNEEVKEETHEHEH) show a composition bias toward basic and acidic residues. The tract at residues 21-52 (EELKNEEVKEETHEHEHKHGGHTCCGKHGHKH) is disordered. The span at 38–51 (KHGGHTCCGKHGHK) shows a compositional bias: basic residues.

This sequence belongs to the GrpE family. As to quaternary structure, homodimer.

Its subcellular location is the cytoplasm. Functionally, participates actively in the response to hyperosmotic and heat shock by preventing the aggregation of stress-denatured proteins, in association with DnaK and GrpE. It is the nucleotide exchange factor for DnaK and may function as a thermosensor. Unfolded proteins bind initially to DnaJ; upon interaction with the DnaJ-bound protein, DnaK hydrolyzes its bound ATP, resulting in the formation of a stable complex. GrpE releases ADP from DnaK; ATP binding to DnaK triggers the release of the substrate protein, thus completing the reaction cycle. Several rounds of ATP-dependent interactions between DnaJ, DnaK and GrpE are required for fully efficient folding. This Fusobacterium nucleatum subsp. polymorphum (Fusobacterium polymorphum) protein is Protein GrpE.